Consider the following 384-residue polypeptide: Putative RNA methyltransferase slr0064 (384 aa).

The THUMP domain occupies 53-164; the sequence is LLYRINLWSR…QNHCQLSLDS (112 aa).

It belongs to the methyltransferase superfamily.

This chain is Putative RNA methyltransferase slr0064, found in Synechocystis sp. (strain ATCC 27184 / PCC 6803 / Kazusa).